Reading from the N-terminus, the 2153-residue chain is RNA-directed RNA polymerase L (2153 aa).

Residues H36, E54, D97, E110, and V111 each coordinate Mn(2+). The For endonuclease activity role is filled by K124. The RdRp catalytic domain maps to 957–1143 (TGKKIRFKRK…AVNQEMWKSM (187 aa)). Residue D1100 coordinates Mg(2+).

Belongs to the Bunyavirales RNA polymerase family. Interacts with the viral nucleoprotein. The cofactor is Mn(2+). It depends on Mg(2+) as a cofactor.

It localises to the host cytoplasm. Its subcellular location is the host perinuclear region. The catalysed reaction is RNA(n) + a ribonucleoside 5'-triphosphate = RNA(n+1) + diphosphate. Its function is as follows. RNA-dependent RNA polymerase, which is responsible for the replication and transcription of the viral RNA genome using antigenomic RNA as an intermediate. During transcription, synthesizes subgenomic RNAs and assures their capping by a cap-snatching mechanism, which involves the endonuclease activity cleaving the host capped pre-mRNAs. These short capped RNAs are then used as primers for viral transcription. Cleaves ssRNA substrates but not DNA. Seems to downregulate the expression of its own and heterologous mRNAs through its endonuclease activity. The chain is RNA-directed RNA polymerase L from Black Creek Canal orthohantavirus (BCCV).